Consider the following 476-residue polypeptide: Protein PAL OF QUIRKY (476 aa).

The first 14 residues, 1–14, serve as a signal peptide directing secretion; the sequence is MTTVSSAFATVAEG. Residues 204–256 form a disordered region; it reads TRRTNSGTSGSGDGNGGICGQESMMLETNSSFGSTSSSVSSSNLPPIKSSGED. Gly residues predominate over residues 212 to 222; the sequence is SGSGDGNGGIC. Residues 233–252 are compositionally biased toward low complexity; the sequence is SSFGSTSSSVSSSNLPPIKS.

Homodimer. Interacts with QKY and SUB/SCM at the plasma membrane. As to expression, observed in seedlings, roots, shoots, leaves, stems, inflorescence and flowers.

Its subcellular location is the cell membrane. It localises to the endomembrane system. Its function is as follows. Collaboratively with SUB and QKY, regulates cell growth anisotropy during gynoecium development, thus linking together cell-cell communication and cellular growth. This chain is Protein PAL OF QUIRKY, found in Arabidopsis thaliana (Mouse-ear cress).